The following is a 597-amino-acid chain: Elongation factor 4 (597 aa).

The 183-residue stretch at 2 to 184 folds into the tr-type G domain; it reads DHIRNFSIIA…ALIAKVPPPK (183 aa). Residues 14–19 and 131–134 contribute to the GTP site; these read DHGKST and NKID.

The protein belongs to the TRAFAC class translation factor GTPase superfamily. Classic translation factor GTPase family. LepA subfamily.

It localises to the cell inner membrane. The enzyme catalyses GTP + H2O = GDP + phosphate + H(+). Its function is as follows. Required for accurate and efficient protein synthesis under certain stress conditions. May act as a fidelity factor of the translation reaction, by catalyzing a one-codon backward translocation of tRNAs on improperly translocated ribosomes. Back-translocation proceeds from a post-translocation (POST) complex to a pre-translocation (PRE) complex, thus giving elongation factor G a second chance to translocate the tRNAs correctly. Binds to ribosomes in a GTP-dependent manner. The chain is Elongation factor 4 from Burkholderia multivorans (strain ATCC 17616 / 249).